A 227-amino-acid chain; its full sequence is Orotate phosphoribosyltransferase (227 aa).

5-phospho-alpha-D-ribose 1-diphosphate is bound at residue Lys34. 42-43 (FF) provides a ligand contact to orotate. Residues 80–81 (YK), Arg106, Lys107, Lys110, His112, and 131–139 (DDVISAGTS) each bind 5-phospho-alpha-D-ribose 1-diphosphate. The orotate site is built by Ser135 and Arg163.

Belongs to the purine/pyrimidine phosphoribosyltransferase family. PyrE subfamily. In terms of assembly, homodimer. It depends on Mg(2+) as a cofactor.

The catalysed reaction is orotidine 5'-phosphate + diphosphate = orotate + 5-phospho-alpha-D-ribose 1-diphosphate. The protein operates within pyrimidine metabolism; UMP biosynthesis via de novo pathway; UMP from orotate: step 1/2. Functionally, catalyzes the transfer of a ribosyl phosphate group from 5-phosphoribose 1-diphosphate to orotate, leading to the formation of orotidine monophosphate (OMP). The protein is Orotate phosphoribosyltransferase of Cupriavidus necator (strain ATCC 17699 / DSM 428 / KCTC 22496 / NCIMB 10442 / H16 / Stanier 337) (Ralstonia eutropha).